The primary structure comprises 272 residues: Cholesterol 25-hydroxylase (272 aa).

Asn5 is a glycosylation site (N-linked (GlcNAc...) asparagine). The next 3 helical transmembrane spans lie at 38 to 58, 84 to 104, and 121 to 141; these read FFPVIFSITTYVGFCLPFVVL, LLPCLGQTLYQHVMFVFPVTL, and LLLLLHHILFCLLLFDMEFFV. The Fatty acid hydroxylase domain maps to 129 to 263; that stretch reads LFCLLLFDME…FTHWDKILGT (135 aa). Positions 142 to 146 match the Histidine box-1 motif; sequence WHLLH. The Histidine box-2 signature appears at 157–161; sequence HKVHH. 2 N-linked (GlcNAc...) asparagine glycosylation sites follow: Asn163 and Asn189. Positions 238 to 244 match the Histidine box-3 motif; the sequence is HHDLHHS.

The protein belongs to the sterol desaturase family. Fe cation is required as a cofactor. In terms of processing, N-glycosylated.

It localises to the endoplasmic reticulum membrane. It carries out the reaction cholesterol + AH2 + O2 = 25-hydroxycholesterol + A + H2O. It catalyses the reaction cholesterol + NADPH + O2 + H(+) = 25-hydroxycholesterol + NADP(+) + H2O. In terms of biological role, catalyzes the formation of 25-hydroxycholesterol from cholesterol, leading to repress cholesterol biosynthetic enzymes. Plays a key role in cell positioning and movement in lymphoid tissues: 25-hydroxycholesterol is an intermediate in biosynthesis of 7-alpha,25-dihydroxycholesterol (7-alpha,25-OHC), an oxysterol that acts as a ligand for the G protein-coupled receptor GPR183/EBI2, a chemotactic receptor for a number of lymphoid cells. May play an important role in regulating lipid metabolism by synthesizing a corepressor that blocks sterol regulatory element binding protein (SREBP) processing. As an interferon-stimulated gene, has broad antiviral activities against a wide range of enveloped viruses, such as vesicular stomatitis virus (VSV) and SARS coronavirus-2 (SARS-CoV-2). Its product, 25-hydroxycholesterol, activates the ER-localized enzyme ACAT to induce internalization of accessible cholesterol on the plasma membrane and restricts SARS-CoV-2 S protein-mediated fusion which inhibits virus replication. In testis, production of 25-hydroxycholesterol by macrophages plays a role in Leydig cell differentiation. Required to restrain inflammation in macrophages: production of 25-hydroxycholesterol protects macrophages from cholesterol overload, thereby preventing mitochondrial DNA release and subsequent activation of the AIM2 inflammasome. This is Cholesterol 25-hydroxylase from Homo sapiens (Human).